The sequence spans 94 residues: Preprofallaxidin-9 (94 aa).

An N-terminal signal peptide occupies residues 1–22; it reads MASLKKSLFLVLFLGLVSLSIC. Positions 23–46 are excised as a propeptide; that stretch reads EEEKRENEEDAEDENHEEESEEKR. The segment at 27 to 46 is disordered; the sequence is RENEEDAEDENHEEESEEKR. Residues 30–42 show a composition bias toward acidic residues; it reads EEDAEDENHEEES. Leu-62 is modified (leucine amide). Positions 66 to 70 are excised as a propeptide; the sequence is SEEKR. Position 75 is a methionine amide (Met-75). The propeptide occupies 79–83; the sequence is SEEKR. Met-88 carries the post-translational modification Methionine amide. The propeptide occupies 92-94; sequence SEE.

This sequence belongs to the frog skin active peptide (FSAP) family. Brevinin subfamily. Expressed by the skin glands.

It localises to the secreted. Its function is as follows. Fallaxidin-1.3 shows no antibacterial activity against Gram-positive or Gram-negative bacteria. Does not inhibit the formation of NO by neuronal nitric oxide synthase. Has no effect on splenocyte proliferation or smooth muscle contraction. In terms of biological role, fallaxidin-3.2 shows antibacterial activity against the Gram-positive bacteria E.faecalis (MIC=100 uM) and L.lactis (MIC=500 uM). No antibacterial activity against the Gram-positive bacteria B.cereus, L.innocua, M.luteus, S.epidermidis, S.uberis and S.aureus, or the Gram-negative bacteria E.cloacae and E.coli. This Litoria fallax (Eastern dwarf tree frog) protein is Preprofallaxidin-9.